We begin with the raw amino-acid sequence, 396 residues long: L-lactate dehydrogenase (396 aa).

The region spanning 1 to 380 (MIISAASDYR…TQDSLVQGLG (380 aa)) is the FMN hydroxy acid dehydrogenase domain. Y24 is a binding site for substrate. Residues S106 and Q127 each contribute to the FMN site. Y129 contributes to the substrate binding site. FMN is bound at residue T155. Substrate is bound at residue R164. K251 is a binding site for FMN. H275 acts as the Proton acceptor in catalysis. R278 provides a ligand contact to substrate. FMN is bound at residue 306-330 (DSGIRNGLDVVRMIALGADTVLLGR).

This sequence belongs to the FMN-dependent alpha-hydroxy acid dehydrogenase family. Requires FMN as cofactor.

It localises to the cell inner membrane. It catalyses the reaction (S)-lactate + A = pyruvate + AH2. Catalyzes the conversion of L-lactate to pyruvate. Is coupled to the respiratory chain. In Shigella boydii serotype 18 (strain CDC 3083-94 / BS512), this protein is L-lactate dehydrogenase.